The following is a 628-amino-acid chain: E3 SUMO-protein ligase PIAS3 (628 aa).

The segment at 1-200 (MAELGELKHM…QLRFCLCETS (200 aa)) is interaction with CCAR2. An SAP domain is found at 11 to 45 (VMSFRVSELQVLLGFAGRNKSGRKHELLAKALHLL). The short motif at 19-23 (LQVLL) is the LXXLL motif element. Residues K46 and K56 each participate in a glycyl lysine isopeptide (Lys-Gly) (interchain with G-Cter in SUMO2) cross-link. Residues 72–95 (PSDLSLLSLPPGTSPVGSPSPLAS) form a disordered region. The PINIT domain maps to 115–280 (MHPPLPQPVH…SLSVYLVRQL (166 aa)). Glycyl lysine isopeptide (Lys-Gly) (interchain with G-Cter in SUMO2) cross-links involve residues K230 and K307. The SP-RING-type zinc finger occupies 312–393 (PDSEVATTSL…FMEILNSCSD (82 aa)). 4 residues coordinate Zn(2+): C343, H345, C366, and C369. Residues 450–460 (LTIESSSDEED) are SUMO1-binding. Residues K466 and K482 each participate in a glycyl lysine isopeptide (Lys-Gly) (interchain with G-Cter in SUMO2) cross-link. The interval 573–618 (LAPTLGSSHRSATPAPAPGRVSSIVAPGSSLREGHGGPLPSGPSLT) is disordered.

It belongs to the PIAS family. In terms of assembly, binds SUMO1 and UBE2I. Interacts with AR, BCL11A, GFI1, HMGA2, IRF1, MITF, NCOA2, as well as with STAT3, after treatment with IL6, CNTF or OSM and with STAT5, after PRL stimulation. Interacts with PLAG1. Interacts with ZFHX3. Interacts with MTA1. Interacts with CCAR2 (via N-terminus). Interacts with TRIM8. Interacts with PRDM1. In terms of processing, sumoylated. Widely expressed, with highest levels in lung, kidney and spleen.

The protein localises to the cytoplasm. Its subcellular location is the nucleus. It is found in the nucleus speckle. Its pathway is protein modification; protein sumoylation. Functions as an E3-type small ubiquitin-like modifier (SUMO) ligase, stabilizing the interaction between UBE2I and the substrate, and as a SUMO-tethering factor. Plays a crucial role as a transcriptional coregulation in various cellular pathways, including the STAT pathway and the steroid hormone signaling pathway. The effects of this transcriptional coregulation, transactivation or silencing, may vary depending upon the biological context. Enhances the sumoylation of MTA1 and may participate in its paralog-selective sumoylation. Sumoylates CCAR2 which promotes its interaction with SIRT1. Diminishes the sumoylation of ZFHX3 by preventing the colocalization of ZFHX3 with SUMO1 in the nucleus. The sequence is that of E3 SUMO-protein ligase PIAS3 (Pias3) from Rattus norvegicus (Rat).